Here is a 486-residue protein sequence, read N- to C-terminus: Glycogen synthase (486 aa).

Residue Lys-15 participates in ADP-alpha-D-glucose binding.

It belongs to the glycosyltransferase 1 family. Bacterial/plant glycogen synthase subfamily.

The enzyme catalyses [(1-&gt;4)-alpha-D-glucosyl](n) + ADP-alpha-D-glucose = [(1-&gt;4)-alpha-D-glucosyl](n+1) + ADP + H(+). It participates in glycan biosynthesis; glycogen biosynthesis. Functionally, synthesizes alpha-1,4-glucan chains using ADP-glucose. This chain is Glycogen synthase, found in Pseudothermotoga lettingae (strain ATCC BAA-301 / DSM 14385 / NBRC 107922 / TMO) (Thermotoga lettingae).